A 369-amino-acid polypeptide reads, in one-letter code: Putative glutamate--cysteine ligase 2-1 (369 aa).

The protein belongs to the glutamate--cysteine ligase type 2 family. YbdK subfamily.

It catalyses the reaction L-cysteine + L-glutamate + ATP = gamma-L-glutamyl-L-cysteine + ADP + phosphate + H(+). In terms of biological role, ATP-dependent carboxylate-amine ligase which exhibits weak glutamate--cysteine ligase activity. The chain is Putative glutamate--cysteine ligase 2-1 from Rhodococcus jostii (strain RHA1).